The primary structure comprises 253 residues: Probable transcriptional regulatory protein Tery_2125 (253 aa).

The protein belongs to the TACO1 family.

The protein localises to the cytoplasm. The protein is Probable transcriptional regulatory protein Tery_2125 of Trichodesmium erythraeum (strain IMS101).